The chain runs to 76 residues: Sec-independent protein translocase protein TatA (76 aa).

A helical transmembrane segment spans residues 1 to 21 (MGGISIWQLLIIALIVVLLFG). The segment at 43-76 (MSSEDEKKAIEDTSAEKTAQTEEKKTESKDKEQA) is disordered. Positions 46 to 76 (EDEKKAIEDTSAEKTAQTEEKKTESKDKEQA) are enriched in basic and acidic residues.

The protein belongs to the TatA/E family. In terms of assembly, the Tat system comprises two distinct complexes: a TatABC complex, containing multiple copies of TatA, TatB and TatC subunits, and a separate TatA complex, containing only TatA subunits. Substrates initially bind to the TatABC complex, which probably triggers association of the separate TatA complex to form the active translocon.

It localises to the cell inner membrane. Its function is as follows. Part of the twin-arginine translocation (Tat) system that transports large folded proteins containing a characteristic twin-arginine motif in their signal peptide across membranes. TatA could form the protein-conducting channel of the Tat system. The polypeptide is Sec-independent protein translocase protein TatA (Shewanella loihica (strain ATCC BAA-1088 / PV-4)).